The chain runs to 284 residues: MTLNFPLLLVIAVAVCGALALVDLVLFAPRRRAAISSYEGQVNEPDPAVLEKLNKEPLLVEYGKSFFPVLFIVLVLRSFLVEPFQIPSGSMKPTLEVGDFILVNKFAYGIRLPVLDTKVIPIGDPQRGDVMVFRYPSEPNINYIKRVVGLPGDTVRYTKEKRLYVNGELVAEKLVGEEPGTLGSVTLYQEKLGQAEHLIRKEMSRYRIEPDRQWTIPAGHYFMMGDNRDNSNDSRYWNDPKIPKDLLGMVPDRNIVGKAFAVWMSWPDPKMSNLPNFSRVGVIH.

A helical membrane pass occupies residues 4 to 22 (NFPLLLVIAVAVCGALALV). The Cytoplasmic segment spans residues 23–58 (DLVLFAPRRRAAISSYEGQVNEPDPAVLEKLNKEPL). The helical transmembrane segment at 59–77 (LVEYGKSFFPVLFIVLVLR) threads the bilayer. Residues 78–284 (SFLVEPFQIP…PNFSRVGVIH (207 aa)) are Periplasmic-facing. Active-site residues include Ser90 and Lys145.

The protein belongs to the peptidase S26 family.

It localises to the cell inner membrane. The catalysed reaction is Cleavage of hydrophobic, N-terminal signal or leader sequences from secreted and periplasmic proteins.. The sequence is that of Signal peptidase I (lepB) from Pseudomonas aeruginosa (strain ATCC 15692 / DSM 22644 / CIP 104116 / JCM 14847 / LMG 12228 / 1C / PRS 101 / PAO1).